A 335-amino-acid polypeptide reads, in one-letter code: Fructose-1,6-bisphosphatase class 1 (335 aa).

The Mg(2+) site is built by Glu92, Asp114, Leu116, and Asp117. Substrate is bound by residues 117-120, Asn209, and Lys275; that span reads DGSS. Glu281 serves as a coordination point for Mg(2+).

This sequence belongs to the FBPase class 1 family. In terms of assembly, homotetramer. It depends on Mg(2+) as a cofactor.

It is found in the cytoplasm. It catalyses the reaction beta-D-fructose 1,6-bisphosphate + H2O = beta-D-fructose 6-phosphate + phosphate. It participates in carbohydrate biosynthesis; gluconeogenesis. This chain is Fructose-1,6-bisphosphatase class 1, found in Verminephrobacter eiseniae (strain EF01-2).